Consider the following 197-residue polypeptide: 3-isopropylmalate dehydratase small subunit (197 aa).

It belongs to the LeuD family. LeuD type 1 subfamily. In terms of assembly, heterodimer of LeuC and LeuD.

The enzyme catalyses (2R,3S)-3-isopropylmalate = (2S)-2-isopropylmalate. The protein operates within amino-acid biosynthesis; L-leucine biosynthesis; L-leucine from 3-methyl-2-oxobutanoate: step 2/4. Functionally, catalyzes the isomerization between 2-isopropylmalate and 3-isopropylmalate, via the formation of 2-isopropylmaleate. The protein is 3-isopropylmalate dehydratase small subunit of Geobacillus kaustophilus (strain HTA426).